We begin with the raw amino-acid sequence, 949 residues long: Insulin receptor substrate 1 (949 aa).

Residues Gly8–Arg109 form the PH domain. One can recognise an IRS-type PTB domain in the interval Tyr122–Asn236. The disordered stretch occupies residues Pro247–Val270. Residues Ser286, Ser287, and Ser342 each carry the phosphoserine modification. The span at Arg304–Phe345 shows a compositional bias: polar residues. A disordered region spans residues Arg304–Tyr373. Residue Tyr410 is modified to Phosphotyrosine; by INSR. The YXXM motif 1 motif lies at Tyr410–Met413. Positions Arg530–Pro556 are disordered. At Ser554 the chain carries Phosphoserine. A YXXM motif 2 motif is present at residues Tyr640–Met643. Positions Arg696–Ser706 are enriched in basic and acidic residues. The segment at Arg696–Lys718 is disordered. Tyr892 carries the phosphotyrosine; by INSR modification. The tract at residues Ala906 to Thr949 is disordered. A phosphoserine mark is found at Ser913 and Ser916. At Tyr929 the chain carries Phosphotyrosine; by INSR. Residues Ser937 to Thr949 are compositionally biased toward low complexity.

Bindings to phosphatidylinositol 3-kinase and SHP2.

In terms of biological role, activates phosphatidylinositol 3-kinase when bound to the regulatory p85 subunit. May mediate the control of various cellular processes by insulin-like peptides. When phosphorylated by the insulin receptor binds specifically to various cellular proteins containing SH2 domains. Involved in control of cell proliferation, cell size, and body and organ growth throughout development. Also has a role in a signaling pathway controlling the physiological response required to endure periods of low nutrient conditions. Insulin/insulin-like growth factor (IGF) signaling pathway has a role in regulating aging and is necessary in the ovary for vitellogenic maturation. In Drosophila yakuba (Fruit fly), this protein is Insulin receptor substrate 1.